Here is a 310-residue protein sequence, read N- to C-terminus: Transcription factor LRL2 (310 aa).

Low complexity-rich tracts occupy residues 1 to 20 and 104 to 126; these read MNSS…LQSP and QTQT…QPQT. 2 disordered regions span residues 1 to 23 and 95 to 143; these read MNSS…PATF and FHLP…PHSI. The interval 136 to 149 is basic motif; degenerate; it reads QATDPHSIAERLRR. Residues 136-185 form the bHLH domain; sequence QATDPHSIAERLRRERIAERMKSLQELVPNGNKTDKASMLDEIIDYVKFL. Positions 150 to 185 are helix-loop-helix motif; that stretch reads ERIAERMKSLQELVPNGNKTDKASMLDEIIDYVKFL. Residues 203 to 225 form a disordered region; that stretch reads ASSQISEDAGGSHENTSSSGEAK.

Homodimer. As to expression, expressed constitutively in roots, leaves, stems, and flowers.

It localises to the nucleus. Transcription factor that regulates the development of root hairs. Transcription factor that regulates the development of sperm cells. The sequence is that of Transcription factor LRL2 from Arabidopsis thaliana (Mouse-ear cress).